A 617-amino-acid polypeptide reads, in one-letter code: Acetolactate synthase large subunit (617 aa).

Thiamine diphosphate is bound at residue Glu-71. Residues Arg-173, 281–302 (HGTA…VGAR), and 324–343 (EIDP…VLGD) each bind FAD. Residues 413–492 (QHQMWAAQHL…VKVVIVNNHW (80 aa)) are thiamine pyrophosphate binding. 2 residues coordinate Mg(2+): Asp-463 and Asn-490.

It belongs to the TPP enzyme family. In terms of assembly, dimer of large and small chains. The cofactor is Mg(2+). Thiamine diphosphate serves as cofactor.

The catalysed reaction is 2 pyruvate + H(+) = (2S)-2-acetolactate + CO2. It participates in amino-acid biosynthesis; L-isoleucine biosynthesis; L-isoleucine from 2-oxobutanoate: step 1/4. It functions in the pathway amino-acid biosynthesis; L-valine biosynthesis; L-valine from pyruvate: step 1/4. The sequence is that of Acetolactate synthase large subunit (ilvB) from Parasynechococcus marenigrum (strain WH8102).